Consider the following 294-residue polypeptide: dTDP-4-dehydrorhamnose reductase (294 aa).

Residues 11-13 (GQL), 38-39 (DI), and 62-64 (AYT) contribute to the NADH site. NADPH contacts are provided by residues 12-13 (QL), 38-39 (DI), and 62-64 (AYT). 103 to 104 (TD) provides a ligand contact to dTDP-beta-L-rhamnose. NADH-binding residues include Tyr-127 and Lys-131. NADPH contacts are provided by Tyr-127 and Lys-131. The Proton donor/acceptor role is filled by Tyr-127. Trp-152 is a binding site for dTDP-beta-L-rhamnose.

The protein belongs to the dTDP-4-dehydrorhamnose reductase family. Homodimer. Mg(2+) serves as cofactor.

The enzyme catalyses dTDP-beta-L-rhamnose + NADP(+) = dTDP-4-dehydro-beta-L-rhamnose + NADPH + H(+). It functions in the pathway carbohydrate biosynthesis; dTDP-L-rhamnose biosynthesis. The protein operates within bacterial outer membrane biogenesis; LPS O-antigen biosynthesis. In terms of biological role, involved in the biosynthesis of the dTDP-L-rhamnose which is an important component of lipopolysaccharide (LPS). Catalyzes the reduction of dTDP-6-deoxy-L-lyxo-4-hexulose to yield dTDP-L-rhamnose. This chain is dTDP-4-dehydrorhamnose reductase, found in Aggregatibacter actinomycetemcomitans (Actinobacillus actinomycetemcomitans).